Consider the following 949-residue polypeptide: uncharacterized protein (949 aa).

The region spanning 64-170 is the Calponin-homology (CH) domain; that stretch reads LCSVHEAKKW…YCLHALSYLL (107 aa).

Its subcellular location is the nucleus. This is an uncharacterized protein from Schizosaccharomyces pombe (strain 972 / ATCC 24843) (Fission yeast).